The primary structure comprises 395 residues: MALPGYPLGNVDDSRSKDSPAGEPQGQVPLTADVLAVSSSVASTDWQDIDQASFKTATPRAISTSGDKDKSAVVPEHGQKTPRKITPLLPSQNPSPLQVSMSLQNPAWDRQVQDARTSQSLVVFPSHLLGKDKMSQMASVPEREPESAPSAPSAELQSTQHMEAQPVESDADHVTAGANGQHGPQAASTTKSAEEKAEHPKAPHPEAEALPSDESPVAMGANVVDSLGDLQTWFFPPPPAGSVSPSPGPHEVALGRRPLDSSLYTASEENSYMRSMTSLLDRGEGSISSLADILVWSETTMGMAIATGFLDSGHSTVADLLHSSGPSLRSVPSLVGSVSSAFSSGLVSGTSSALRTITRVLETVEQRTVEGIRSAMRYLTSHLTPRQAQADPNYD.

4 disordered regions span residues 1–32 (MALP…PLTA), 46–100 (WQDI…LQVS), 133–215 (KMSQ…SDES), and 235–258 (FPPP…GRRP). The segment covering 53–65 (SFKTATPRAISTS) has biased composition (polar residues). Residues 87–98 (PLLPSQNPSPLQ) show a composition bias toward low complexity. Basic and acidic residues predominate over residues 192 to 207 (SAEEKAEHPKAPHPEA). S333 carries the phosphoserine modification.

As to expression, testis. Detected in germ cells at all stages of the seminiferous epithelium, strong expression in elongating spermatids (at protein level).

It is found in the cytoplasm. This Homo sapiens (Human) protein is Testis-expressed protein 44.